The sequence spans 312 residues: ECF RNA polymerase sigma factor SigJ (312 aa).

A sigma-70 factor domain-2 region spans residues 6–65 (FEALRQHLMSVAYRLTGTVADAEDIVQEAWLRWDSPDTVIADPRAWLTTVVSRLGLDKLR). The Polymerase core binding motif lies at 29-32 (DIVQ). Residues 107–155 (MVVLERLRPDQRVAFVLHDGFAVPFAEVAEVLGTSEAAARQLASRARKA) form a sigma-70 factor domain-4 region. A DNA-binding region (H-T-H motif) is located at residues 131 to 150 (FAEVAEVLGTSEAAARQLAS). A disordered region spans residues 293–312 (GSPLKERRAQPTGRGRHHRN).

The protein belongs to the sigma-70 factor family. ECF subfamily. In terms of assembly, interacts transiently with the RNA polymerase catalytic core formed by RpoA, RpoB, RpoC and RpoZ (2 alpha, 1 beta, 1 beta' and 1 omega subunit) to form the RNA polymerase holoenzyme that can initiate transcription.

In terms of biological role, sigma factors are initiation factors that promote the attachment of RNA polymerase to specific initiation sites and are then released. Extracytoplasmic function (ECF) sigma factors are held in an inactive form by an anti-sigma factor until released, although no anti-sigma factor is known for this protein. Regulates the promoter of SigI, may not be autoregulated. This is ECF RNA polymerase sigma factor SigJ (sigJ) from Mycobacterium tuberculosis (strain ATCC 25618 / H37Rv).